Consider the following 411-residue polypeptide: Argininosuccinate synthase (411 aa).

ATP contacts are provided by residues 13–21 (AYSGGLDTS) and Ala40. The L-citrulline site is built by Tyr91 and Ser96. Gly121 contacts ATP. L-aspartate-binding residues include Thr123, Asn127, and Asp128. L-citrulline is bound at residue Asn127. Residues Arg131, Ser182, Ser191, Glu267, and Tyr279 each coordinate L-citrulline.

This sequence belongs to the argininosuccinate synthase family. Type 1 subfamily. As to quaternary structure, homotetramer.

It is found in the cytoplasm. It catalyses the reaction L-citrulline + L-aspartate + ATP = 2-(N(omega)-L-arginino)succinate + AMP + diphosphate + H(+). It functions in the pathway amino-acid biosynthesis; L-arginine biosynthesis; L-arginine from L-ornithine and carbamoyl phosphate: step 2/3. The polypeptide is Argininosuccinate synthase (Bartonella tribocorum (strain CIP 105476 / IBS 506)).